Consider the following 780-residue polypeptide: Endonuclease MutS2 (780 aa).

Residue 334–341 (GPNAGGKT) coordinates ATP. One can recognise a Smr domain in the interval 706–780 (IDIRGMRSVD…GGSGKTIVEI (75 aa)).

Belongs to the DNA mismatch repair MutS family. MutS2 subfamily. As to quaternary structure, homodimer. Binds to stalled ribosomes, contacting rRNA.

Endonuclease that is involved in the suppression of homologous recombination and thus may have a key role in the control of bacterial genetic diversity. Functionally, acts as a ribosome collision sensor, splitting the ribosome into its 2 subunits. Detects stalled/collided 70S ribosomes which it binds and splits by an ATP-hydrolysis driven conformational change. Acts upstream of the ribosome quality control system (RQC), a ribosome-associated complex that mediates the extraction of incompletely synthesized nascent chains from stalled ribosomes and their subsequent degradation. Probably generates substrates for RQC. The chain is Endonuclease MutS2 from Borreliella burgdorferi (strain ATCC 35210 / DSM 4680 / CIP 102532 / B31) (Borrelia burgdorferi).